A 136-amino-acid polypeptide reads, in one-letter code: Peptide methionine sulfoxide reductase MsrB (136 aa).

Residues Ser7–Asp129 enclose the MsrB domain. Residues Cys46, Cys49, Cys95, and Cys98 each coordinate Zn(2+). Catalysis depends on Cys118, which acts as the Nucleophile.

This sequence belongs to the MsrB Met sulfoxide reductase family. Zn(2+) is required as a cofactor.

The enzyme catalyses L-methionyl-[protein] + [thioredoxin]-disulfide + H2O = L-methionyl-(R)-S-oxide-[protein] + [thioredoxin]-dithiol. The chain is Peptide methionine sulfoxide reductase MsrB from Erwinia tasmaniensis (strain DSM 17950 / CFBP 7177 / CIP 109463 / NCPPB 4357 / Et1/99).